Reading from the N-terminus, the 787-residue chain is Endonuclease MutS2 (787 aa).

334 to 341 (GPNTGGKT) serves as a coordination point for ATP. The Smr domain occupies 712-787 (LDLRGKRYEE…GNGATIVTFK (76 aa)).

Belongs to the DNA mismatch repair MutS family. MutS2 subfamily. In terms of assembly, homodimer. Binds to stalled ribosomes, contacting rRNA.

Endonuclease that is involved in the suppression of homologous recombination and thus may have a key role in the control of bacterial genetic diversity. Functionally, acts as a ribosome collision sensor, splitting the ribosome into its 2 subunits. Detects stalled/collided 70S ribosomes which it binds and splits by an ATP-hydrolysis driven conformational change. Acts upstream of the ribosome quality control system (RQC), a ribosome-associated complex that mediates the extraction of incompletely synthesized nascent chains from stalled ribosomes and their subsequent degradation. Probably generates substrates for RQC. The chain is Endonuclease MutS2 from Latilactobacillus sakei subsp. sakei (strain 23K) (Lactobacillus sakei subsp. sakei).